A 217-amino-acid polypeptide reads, in one-letter code: Glyoxalase ElbB (217 aa).

Residue Cys-135 is the Nucleophile of the active site.

This sequence belongs to the peptidase C56 family. Homodimer.

The catalysed reaction is glyoxal + H2O = glycolate + H(+). In terms of biological role, displays glyoxalase activity, catalyzing the conversion of glyoxal to glycolate. However, this apparent glyoxalase activity may reflect a protein deglycase activity, which could be the primary function of this protein like other DJ-1 superfamily members such as PARK7, YajL, YhbO and HchA. Is not able to use methylglyoxal as substrate. This chain is Glyoxalase ElbB, found in Escherichia coli (strain K12).